Here is a 1713-residue protein sequence, read N- to C-terminus: uncharacterized protein (1713 aa).

Over residues 1-12 the composition is skewed to polar residues; sequence MNENEFSTNSLI. 7 disordered regions span residues 1 to 35, 79 to 200, 226 to 290, 309 to 557, 713 to 734, 808 to 952, and 1143 to 1190; these read MNEN…INFG, QQLN…KLSN, GNNN…QPLS, QYLS…PMSH, SNDQ…KKDR, SPPM…SITT, and HHHH…SISR. Low complexity-rich tracts occupy residues 13–35, 79–109, 126–170, 177–200, and 226–264; these read NQQG…INFG, QQLN…NNNN, NNSG…NSGN, NMSD…KLSN, and GNNN…GGNN. A compositionally biased stretch (basic residues) spans 265–276; it reads SHHHHNHSHHNS. 2 stretches are compositionally biased toward low complexity: residues 317 to 470 and 478 to 489; these read NNIN…SPAS and SNNFGGNHNNYN. A compositionally biased stretch (basic residues) spans 490 to 504; the sequence is HAHHSHHNNHAHHNT. Residues 505 to 553 are compositionally biased toward low complexity; sequence HNYNNNNNNNNNNNNNNNNNNNNSNNSNNNSNTNNNGNNGNNSNNNNNH. Positions 544–825 form a DNA-binding region, NDT80; sequence GNNSNNNNNH…QNPGRFLNHD (282 aa). Basic and acidic residues predominate over residues 822-832; it reads LNHDKSLKKDP. Residues 838 to 874 are compositionally biased toward gly residues; the sequence is GGKGGGGSGSGGMGGGMGGGMGNNGSSGSSSNGGYGN. 2 stretches are compositionally biased toward low complexity: residues 898-946 and 1148-1189; these read SPTT…PTLT and QQQQ…SSIS. Residues 1240–1355 enclose the Peptidase S74 domain; it reads SDQRIKSNIR…RSLKKEKDHI (116 aa). A run of 3 helical transmembrane segments spans residues 1416-1436, 1447-1467, and 1473-1493; these read TMFV…FYLF, LMNF…TFYV, and LIIA…VGFF. Positions 1596 to 1605 are enriched in low complexity; sequence NSNNNINNNN. Disordered stretches follow at residues 1596 to 1634 and 1646 to 1665; these read NSNN…DFHE and IKGK…SSSN. Positions 1617-1634 are enriched in basic and acidic residues; the sequence is FIDDFKKSSSNNHKDFHE.

Its subcellular location is the membrane. This is an uncharacterized protein from Dictyostelium discoideum (Social amoeba).